A 270-amino-acid chain; its full sequence is Orotidine 5'-phosphate decarboxylase (270 aa).

Residues Asp-39, 61-63, 93-102, Tyr-221, and Arg-239 contribute to the substrate site; these read KTH and DRKFADIGNT. The active-site Proton donor is the Lys-95.

The protein belongs to the OMP decarboxylase family.

It catalyses the reaction orotidine 5'-phosphate + H(+) = UMP + CO2. It functions in the pathway pyrimidine metabolism; UMP biosynthesis via de novo pathway; UMP from orotate: step 2/2. In Candida dubliniensis (strain CD36 / ATCC MYA-646 / CBS 7987 / NCPF 3949 / NRRL Y-17841) (Yeast), this protein is Orotidine 5'-phosphate decarboxylase (URA3).